Consider the following 606-residue polypeptide: Sulfite reductase [NADPH] flavoprotein alpha-component (606 aa).

The 139-residue stretch at V64–V202 folds into the Flavodoxin-like domain. FMN is bound by residues S70–A75, S117–G120, and L153–C162. Over residues Q212–T234 the composition is skewed to low complexity. Residues Q212 to V235 form a disordered region. An FAD-binding FR-type domain is found at T241–P455. FAD is bound by residues T329, K363, R393 to S396, T411 to G413, Y417, and G426 to S429. NADP(+) contacts are provided by residues S526–R527, K532–Q536, and D568. An FAD-binding site is contributed by Y606.

Belongs to the NADPH-dependent sulphite reductase flavoprotein subunit CysJ family. This sequence in the N-terminal section; belongs to the flavodoxin family. The protein in the C-terminal section; belongs to the flavoprotein pyridine nucleotide cytochrome reductase family. As to quaternary structure, alpha(8)-beta(8). The alpha component is a flavoprotein, the beta component is a hemoprotein. It depends on FAD as a cofactor. FMN is required as a cofactor.

It catalyses the reaction hydrogen sulfide + 3 NADP(+) + 3 H2O = sulfite + 3 NADPH + 4 H(+). It functions in the pathway sulfur metabolism; hydrogen sulfide biosynthesis; hydrogen sulfide from sulfite (NADPH route): step 1/1. Component of the sulfite reductase complex that catalyzes the 6-electron reduction of sulfite to sulfide. This is one of several activities required for the biosynthesis of L-cysteine from sulfate. The flavoprotein component catalyzes the electron flow from NADPH -&gt; FAD -&gt; FMN to the hemoprotein component. In Yersinia pestis bv. Antiqua (strain Antiqua), this protein is Sulfite reductase [NADPH] flavoprotein alpha-component.